The following is a 496-amino-acid chain: Cobyric acid synthase (496 aa).

The GATase cobBQ-type domain occupies 257–447 (KINVAIILLK…MHGILDNPAV (191 aa)). C338 functions as the Nucleophile in the catalytic mechanism. Residue H439 is part of the active site.

The protein belongs to the CobB/CobQ family. CobQ subfamily.

It participates in cofactor biosynthesis; adenosylcobalamin biosynthesis. Functionally, catalyzes amidations at positions B, D, E, and G on adenosylcobyrinic A,C-diamide. NH(2) groups are provided by glutamine, and one molecule of ATP is hydrogenolyzed for each amidation. The sequence is that of Cobyric acid synthase from Parabacteroides distasonis (strain ATCC 8503 / DSM 20701 / CIP 104284 / JCM 5825 / NCTC 11152).